The primary structure comprises 252 residues: Indole-3-glycerol phosphate synthase (252 aa).

The protein belongs to the TrpC family.

The enzyme catalyses 1-(2-carboxyphenylamino)-1-deoxy-D-ribulose 5-phosphate + H(+) = (1S,2R)-1-C-(indol-3-yl)glycerol 3-phosphate + CO2 + H2O. The protein operates within amino-acid biosynthesis; L-tryptophan biosynthesis; L-tryptophan from chorismate: step 4/5. The chain is Indole-3-glycerol phosphate synthase from Listeria welshimeri serovar 6b (strain ATCC 35897 / DSM 20650 / CCUG 15529 / CIP 8149 / NCTC 11857 / SLCC 5334 / V8).